A 442-amino-acid polypeptide reads, in one-letter code: 23S rRNA (uracil(1939)-C(5))-methyltransferase RlmD (442 aa).

The region spanning Ala-10–Lys-75 is the TRAM domain. 4 residues coordinate [4Fe-4S] cluster: Cys-88, Cys-94, Cys-97, and Cys-173. S-adenosyl-L-methionine is bound by residues Gln-276, Phe-305, Asn-310, Glu-326, Asn-353, and Asp-374. Cys-400 acts as the Nucleophile in catalysis.

The protein belongs to the class I-like SAM-binding methyltransferase superfamily. RNA M5U methyltransferase family. RlmD subfamily.

The catalysed reaction is uridine(1939) in 23S rRNA + S-adenosyl-L-methionine = 5-methyluridine(1939) in 23S rRNA + S-adenosyl-L-homocysteine + H(+). Functionally, catalyzes the formation of 5-methyl-uridine at position 1939 (m5U1939) in 23S rRNA. This Haemophilus ducreyi (strain 35000HP / ATCC 700724) protein is 23S rRNA (uracil(1939)-C(5))-methyltransferase RlmD.